Here is an 83-residue protein sequence, read N- to C-terminus: Mu-theraphotoxin-Hhn2b 2 (83 aa).

The N-terminal stretch at 1-21 (MKASMFLALAGLVLLFVVCYA) is a signal peptide. Positions 22–48 (SESEEKEFPRELISKIFTVDDFKGEER) are excised as a propeptide. Disulfide bonds link Cys-50/Cys-65, Cys-57/Cys-70, and Cys-64/Cys-77. At Leu-81 the chain carries Leucine amide.

This sequence belongs to the neurotoxin 10 (Hwtx-1) family. 14 (Hntx-1) subfamily. As to quaternary structure, monomer. Expressed by the venom gland.

The protein localises to the secreted. In terms of biological role, weakly blocks the rat SCN2A/SCN1B (Nav1.2/beta-1) sodium channel (IC(50)=68 uM) and the insect sodium channel para/tipE (IC(50)=4.3 uM), without altering the activation or inactivation kinetics (depressant toxin). The protein is Mu-theraphotoxin-Hhn2b 2 of Cyriopagopus hainanus (Chinese bird spider).